A 137-amino-acid polypeptide reads, in one-letter code: 5-hydroxytryptamine receptor 4 (137 aa).

Residues 12-35 traverse the membrane as a helical segment; sequence TPLRVAVLLAGCWAIPVLISFLPI. A glycan (N-linked (GlcNAc...) asparagine) is linked at N58. The chain crosses the membrane as a helical span at residues 67–90; that stretch reads NKPYAITCSVVAFYIPFLLMVLAY. Residues 112–137 form a disordered region; the sequence is APAEGRPPSADQHSTHRMRTETKAAK.

This sequence belongs to the G-protein coupled receptor 1 family. Interacts (via C-terminus 330-346 AA) with GRK5; this interaction is promoted by 5-HT (serotonin).

The protein localises to the cell membrane. It localises to the endosome membrane. In terms of biological role, G-protein coupled receptor for 5-hydroxytryptamine (serotonin), a biogenic hormone that functions as a neurotransmitter, a hormone and a mitogen. Ligand binding causes a conformation change that triggers signaling via guanine nucleotide-binding proteins (G proteins) and modulates the activity of downstream effectors. HTR4 is coupled to G(s) G alpha proteins and mediates activation of adenylate cyclase activity. The chain is 5-hydroxytryptamine receptor 4 (HTR4) from Sus scrofa (Pig).